Reading from the N-terminus, the 131-residue chain is Large ribosomal subunit protein bL19 (131 aa).

This sequence belongs to the bacterial ribosomal protein bL19 family.

Its function is as follows. This protein is located at the 30S-50S ribosomal subunit interface and may play a role in the structure and function of the aminoacyl-tRNA binding site. This is Large ribosomal subunit protein bL19 from Rhodopseudomonas palustris (strain BisA53).